Reading from the N-terminus, the 289-residue chain is Lipoyl synthase 1 (289 aa).

[4Fe-4S] cluster is bound by residues Cys-33, Cys-38, Cys-44, Cys-59, Cys-63, Cys-66, and Ser-274. One can recognise a Radical SAM core domain in the interval 45–263 (FAGGTATFLI…RIGEEELGFL (219 aa)).

Belongs to the radical SAM superfamily. Lipoyl synthase family. It depends on [4Fe-4S] cluster as a cofactor.

Its subcellular location is the cytoplasm. The enzyme catalyses [[Fe-S] cluster scaffold protein carrying a second [4Fe-4S](2+) cluster] + N(6)-octanoyl-L-lysyl-[protein] + 2 oxidized [2Fe-2S]-[ferredoxin] + 2 S-adenosyl-L-methionine + 4 H(+) = [[Fe-S] cluster scaffold protein] + N(6)-[(R)-dihydrolipoyl]-L-lysyl-[protein] + 4 Fe(3+) + 2 hydrogen sulfide + 2 5'-deoxyadenosine + 2 L-methionine + 2 reduced [2Fe-2S]-[ferredoxin]. It participates in protein modification; protein lipoylation via endogenous pathway; protein N(6)-(lipoyl)lysine from octanoyl-[acyl-carrier-protein]: step 2/2. Its function is as follows. Catalyzes the radical-mediated insertion of two sulfur atoms into the C-6 and C-8 positions of the octanoyl moiety bound to the lipoyl domains of lipoate-dependent enzymes, thereby converting the octanoylated domains into lipoylated derivatives. In Parasynechococcus marenigrum (strain WH8102), this protein is Lipoyl synthase 1.